Consider the following 87-residue polypeptide: U3-theraphotoxin-Hhn1a 10 (87 aa).

Residues 1–24 (MVNMEASMFLTFAGLVLLFVVCYA) form the signal peptide. A propeptide spanning residues 25–52 (SESEEKEFPKEMLSSIFAVDNDFKQEER) is cleaved from the precursor. Intrachain disulfides connect C54–C67, C61–C72, and C66–C79.

This sequence belongs to the neurotoxin 10 (Hwtx-1) family. 51 (Hntx-8) subfamily. Hntx-8 sub-subfamily. Expressed by the venom gland.

It is found in the secreted. Ion channel inhibitor. The protein is U3-theraphotoxin-Hhn1a 10 of Cyriopagopus hainanus (Chinese bird spider).